The following is a 180-amino-acid chain: ATP-dependent protease subunit HslV (180 aa).

The active site involves Thr7. Positions 165, 168, and 171 each coordinate Na(+).

The protein belongs to the peptidase T1B family. HslV subfamily. As to quaternary structure, a double ring-shaped homohexamer of HslV is capped on each side by a ring-shaped HslU homohexamer. The assembly of the HslU/HslV complex is dependent on binding of ATP.

Its subcellular location is the cytoplasm. The catalysed reaction is ATP-dependent cleavage of peptide bonds with broad specificity.. Its activity is regulated as follows. Allosterically activated by HslU binding. In terms of biological role, protease subunit of a proteasome-like degradation complex believed to be a general protein degrading machinery. This chain is ATP-dependent protease subunit HslV, found in Bacillus anthracis (strain A0248).